Reading from the N-terminus, the 251-residue chain is UPF0309 protein SGR_3073 (251 aa).

The SIS domain occupies 36–221 (VADTVASGGR…EQLVARGIEP (186 aa)).

It belongs to the UPF0309 family.

The protein is UPF0309 protein SGR_3073 of Streptomyces griseus subsp. griseus (strain JCM 4626 / CBS 651.72 / NBRC 13350 / KCC S-0626 / ISP 5235).